A 417-amino-acid polypeptide reads, in one-letter code: Serine hydroxymethyltransferase (417 aa).

(6S)-5,6,7,8-tetrahydrofolate-binding positions include Leu-120 and Gly-124 to Leu-126. The residue at position 229 (Lys-229) is an N6-(pyridoxal phosphate)lysine.

It belongs to the SHMT family. Homodimer. Pyridoxal 5'-phosphate is required as a cofactor.

It localises to the cytoplasm. The enzyme catalyses (6R)-5,10-methylene-5,6,7,8-tetrahydrofolate + glycine + H2O = (6S)-5,6,7,8-tetrahydrofolate + L-serine. It participates in one-carbon metabolism; tetrahydrofolate interconversion. It functions in the pathway amino-acid biosynthesis; glycine biosynthesis; glycine from L-serine: step 1/1. Functionally, catalyzes the reversible interconversion of serine and glycine with tetrahydrofolate (THF) serving as the one-carbon carrier. This reaction serves as the major source of one-carbon groups required for the biosynthesis of purines, thymidylate, methionine, and other important biomolecules. Also exhibits THF-independent aldolase activity toward beta-hydroxyamino acids, producing glycine and aldehydes, via a retro-aldol mechanism. This is Serine hydroxymethyltransferase from Anaeromyxobacter dehalogenans (strain 2CP-1 / ATCC BAA-258).